A 120-amino-acid polypeptide reads, in one-letter code: Small ribosomal subunit protein uS13 (120 aa).

The interval 93 to 120 (RKGLPVRGQTTKNNARTRKGKKKTVGSK) is disordered. Basic residues predominate over residues 107-120 (ARTRKGKKKTVGSK).

Belongs to the universal ribosomal protein uS13 family. As to quaternary structure, part of the 30S ribosomal subunit. Forms a loose heterodimer with protein S19. Forms two bridges to the 50S subunit in the 70S ribosome.

In terms of biological role, located at the top of the head of the 30S subunit, it contacts several helices of the 16S rRNA. In the 70S ribosome it contacts the 23S rRNA (bridge B1a) and protein L5 of the 50S subunit (bridge B1b), connecting the 2 subunits; these bridges are implicated in subunit movement. Contacts the tRNAs in the A and P-sites. In Helicobacter pylori (strain P12), this protein is Small ribosomal subunit protein uS13.